The following is a 102-amino-acid chain: ATP-dependent Clp protease adapter protein ClpS (102 aa).

This sequence belongs to the ClpS family. As to quaternary structure, binds to the N-terminal domain of the chaperone ClpA.

In terms of biological role, involved in the modulation of the specificity of the ClpAP-mediated ATP-dependent protein degradation. In Desulfotalea psychrophila (strain LSv54 / DSM 12343), this protein is ATP-dependent Clp protease adapter protein ClpS.